Here is a 776-residue protein sequence, read N- to C-terminus: Glucocorticoid receptor (776 aa).

Over residues 1–11 the composition is skewed to polar residues; sequence MDSKESLTSPS. The segment at 1–25 is disordered; sequence MDSKESLTSPSEEIPSSVHGQERGN. The modulating stretch occupies residues 1–419; it reads MDSKESLTSP…LSAVGPPPKF (419 aa). Residue threonine 8 is modified to Phosphothreonine. Arginine 23 carries the post-translational modification Omega-N-methylarginine. Phosphoserine occurs at positions 45, 113, and 134. The interval 157–178 is disordered; the sequence is PETPSDVSSEQQNLKGQTGTNG. The segment covering 161–174 has biased composition (polar residues); it reads SDVSSEQQNLKGQT. Serine 203, serine 211, and serine 226 each carry phosphoserine. A Glycyl lysine isopeptide (Lys-Gly) (interchain with G-Cter in SUMO2) cross-link involves residue lysine 258. A Phosphoserine modification is found at serine 267. Residues lysine 277 and lysine 293 each participate in a glycyl lysine isopeptide (Lys-Gly) (interchain with G-Cter in SUMO); alternate cross-link. Residues lysine 277 and lysine 293 each participate in a glycyl lysine isopeptide (Lys-Gly) (interchain with G-Cter in SUMO2); alternate cross-link. 2 positions are modified to phosphoserine: serine 307 and serine 404. Positions 417 to 492 form a DNA-binding region, nuclear receptor; that stretch reads PKFCLVCSDE…AGMNLEARKT (76 aa). Lysine 418 participates in a covalent cross-link: Glycyl lysine isopeptide (Lys-Gly) (interchain with G-Cter in ubiquitin). 2 consecutive NR C4-type zinc fingers follow at residues 420–440 and 456–480; these read CLVC…CGSC and CAGR…YRKC. Lysine 479, lysine 491, lysine 493, and lysine 494 each carry N6-acetyllysine. Residues 484 to 776 are interaction with CLOCK; that stretch reads GMNLEARKTK…NIKKLLFHQK (293 aa). Positions 486 to 522 are hinge; it reads NLEARKTKKKIKGIQQTTTGISQETPENSANKTIVPA. In terms of domain architecture, NR LBD spans 523–757; the sequence is TLPQLTPTPV…FPEMLAEIIT (235 aa). Residues 531-696 form an interaction with CRY1 region; sequence PVSLLEVIEP…EIRMTYIKEL (166 aa). Lysine 702 participates in a covalent cross-link: Glycyl lysine isopeptide (Lys-Gly) (interchain with G-Cter in SUMO).

This sequence belongs to the nuclear hormone receptor family. NR3 subfamily. As to quaternary structure, heteromultimeric cytoplasmic complex with HSP90AA1, HSPA1A/HSPA1B, and FKBP5 or another immunophilin such as PPID, STIP1, or the immunophilin homolog PPP5C. Upon ligand binding FKBP5 dissociates from the complex and FKBP4 takes its place, thereby linking the complex to dynein and mediating transport to the nucleus, where the complex dissociates. Probably forms a complex composed of chaperones HSP90 and HSP70, co-chaperones CDC37, PPP5C, TSC1 and client protein TSC2, CDK4, AKT, RAF1 and NR3C1; this complex does not contain co-chaperones STIP1/HOP and PTGES3/p23. Directly interacts with UNC45A. Binds to DNA as a homodimer, and as heterodimer with NR3C2 or the retinoid X receptor. Binds STAT5A and STAT5B homodimers and heterodimers. Interacts with NRIP1, POU2F1, POU2F2 and TRIM28. Interacts with several coactivator complexes, including the SMARCA4 complex, CREBBP/EP300, TADA2L (Ada complex) and p160 coactivators such as NCOA2 and NCOA6. Interaction with BAG1 inhibits transactivation. Interacts with HEXIM1 and TGFB1I1. Interacts with NCOA1. Interacts with NCOA3, SMARCA4, SMARCC1, SMARCD1, and SMARCE1. Interacts with CLOCK, CRY1 and CRY2 in a ligand-dependent fashion. Interacts with CIART. Interacts with RWDD3. Interacts with UBE2I/UBC9 and this interaction is enhanced in the presence of RWDD3. Interacts with GRIP1. Interacts with NR4A3 (via nuclear receptor DNA-binding domain), represses transcription activity of NR4A3 on the POMC promoter Nur response element (NurRE). Directly interacts with PNRC2 to attract and form a complex with UPF1 and DCP1A; the interaction leads to rapid mRNA degradation. Interacts with GSK3B. Interacts with FNIP1 and FNIP2. Interacts (via C-terminus) with NR3C1 (via C-terminus). Interacts with MCM3AP. Interacts (via domain NR LBD) with HSP90AA1 and HSP90AB1. In the absence of hormonal ligand, interacts with TACC1. In terms of processing, acetylation by CLOCK reduces its binding to glucocorticoid response elements and its transcriptional activity. Post-translationally, increased proteasome-mediated degradation in response to glucocorticoids. Phosphorylated in the absence of hormone; becomes hyperphosphorylated in the presence of glucocorticoid. The Ser-203, Ser-226 and Ser-404-phosphorylated forms are mainly cytoplasmic, and the Ser-211-phosphorylated form is nuclear. Phosphorylation at Ser-211 increases transcriptional activity. Phosphorylation at Ser-203, Ser-226 and Ser-404 decreases signaling capacity. Phosphorylation at Ser-404 may protect from glucocorticoid-induced apoptosis. Phosphorylation at Ser-203 and Ser-211 is not required in regulation of chromosome segregation. May be dephosphorylated by PPP5C, attenuates NR3C1 action. In terms of processing, sumoylation at Lys-277 and Lys-293 negatively regulates its transcriptional activity. Sumoylation at Lys-702 positively regulates its transcriptional activity in the presence of RWDD3. Sumoylation at Lys-277 and Lys-293 is dispensable whereas sumoylation at Lys-702 is critical for the stimulatory effect of RWDD3 on its transcriptional activity. Heat shock increases sumoylation in a RWDD3-dependent manner. Post-translationally, ubiquitinated by UBR5, leading to its degradation: UBR5 specifically recognizes and binds ligand-bound NR3C1 when it is not associated with coactivators (NCOAs). In presence of NCOAs, the UBR5-degron is not accessible, preventing its ubiquitination and degradation.

It is found in the cytoplasm. Its subcellular location is the nucleus. The protein resides in the mitochondrion. The protein localises to the cytoskeleton. It localises to the spindle. It is found in the microtubule organizing center. Its subcellular location is the centrosome. The protein resides in the chromosome. The protein localises to the nucleoplasm. In terms of biological role, receptor for glucocorticoids (GC). Has a dual mode of action: as a transcription factor that binds to glucocorticoid response elements (GRE), both for nuclear and mitochondrial DNA, and as a modulator of other transcription factors. Affects inflammatory responses, cellular proliferation and differentiation in target tissues. Involved in chromatin remodeling. Plays a role in rapid mRNA degradation by binding to the 5' UTR of target mRNAs and interacting with PNRC2 in a ligand-dependent manner which recruits the RNA helicase UPF1 and the mRNA-decapping enzyme DCP1A, leading to RNA decay. Could act as a coactivator for STAT5-dependent transcription upon growth hormone (GH) stimulation and could reveal an essential role of hepatic GR in the control of body growth. Mediates glucocorticoid-induced apoptosis. Promotes accurate chromosome segregation during mitosis. May act as a tumor suppressor. May play a negative role in adipogenesis through the regulation of lipolytic and antilipogenic gene expression. This Tupaia belangeri (Common tree shrew) protein is Glucocorticoid receptor (NR3C1).